Here is a 376-residue protein sequence, read N- to C-terminus: Chorismate synthase (376 aa).

2 residues coordinate NADP(+): Arg39 and Arg45. FMN-binding positions include 115–117 (RSS), Gly276, 291–295 (KPIPT), and Arg317.

This sequence belongs to the chorismate synthase family. As to quaternary structure, homotetramer. It depends on FMNH2 as a cofactor.

The catalysed reaction is 5-O-(1-carboxyvinyl)-3-phosphoshikimate = chorismate + phosphate. It participates in metabolic intermediate biosynthesis; chorismate biosynthesis; chorismate from D-erythrose 4-phosphate and phosphoenolpyruvate: step 7/7. Catalyzes the anti-1,4-elimination of the C-3 phosphate and the C-6 proR hydrogen from 5-enolpyruvylshikimate-3-phosphate (EPSP) to yield chorismate, which is the branch point compound that serves as the starting substrate for the three terminal pathways of aromatic amino acid biosynthesis. This reaction introduces a second double bond into the aromatic ring system. The chain is Chorismate synthase from Thermotoga maritima (strain ATCC 43589 / DSM 3109 / JCM 10099 / NBRC 100826 / MSB8).